The chain runs to 328 residues: MDLKKCLDMAEAAKAGQLPEISDLEELACLPEQHVLDLLPAANAVRKHFFGDQVHLCCIVNGKSGKCREDCAFCAQSAYAKTSAPVYPLIDSEKMFQGASYARENGVHRYSLVASGGRLPKAEVRMVAEAFSRMGGDGVGYCASLGILDAQDFALLKEAGVDRYHHNLETAESHFKEICTTHAYGDRVKTIREAKKAGMSVCAGGLFGIGESDLQVLELGLALRDLEVDSVPVNFLIPIKGTRLEKSSDLSPLRCLKIISLLRFALGGKEIVICGGRESNLEELHPLVFYAGASGIMTGDYLTAPGRNPQKDHAMIRRLGLTALREGE.

The 228-residue stretch at 50 to 277 (FGDQVHLCCI…GKEIVICGGR (228 aa)) folds into the Radical SAM core domain. [4Fe-4S] cluster contacts are provided by Cys-67, Cys-71, and Cys-74. Positions 111, 142, and 202 each coordinate [2Fe-2S] cluster.

It belongs to the radical SAM superfamily. Biotin synthase family. As to quaternary structure, homodimer. [4Fe-4S] cluster is required as a cofactor. [2Fe-2S] cluster serves as cofactor.

The enzyme catalyses (4R,5S)-dethiobiotin + (sulfur carrier)-SH + 2 reduced [2Fe-2S]-[ferredoxin] + 2 S-adenosyl-L-methionine = (sulfur carrier)-H + biotin + 2 5'-deoxyadenosine + 2 L-methionine + 2 oxidized [2Fe-2S]-[ferredoxin]. Its pathway is cofactor biosynthesis; biotin biosynthesis; biotin from 7,8-diaminononanoate: step 2/2. Its function is as follows. Catalyzes the conversion of dethiobiotin (DTB) to biotin by the insertion of a sulfur atom into dethiobiotin via a radical-based mechanism. This is Biotin synthase from Desulfatibacillum aliphaticivorans.